The sequence spans 398 residues: Argininosuccinate synthase (398 aa).

Ala-8–Ser-16 is a binding site for ATP. Tyr-87 lines the L-citrulline pocket. Gly-117 provides a ligand contact to ATP. L-aspartate is bound by residues Thr-119, Asn-123, and Asp-124. Residue Asn-123 coordinates L-citrulline. 4 residues coordinate L-citrulline: Arg-127, Ser-175, Glu-259, and Tyr-271.

The protein belongs to the argininosuccinate synthase family. Type 1 subfamily. Homotetramer.

It localises to the cytoplasm. It catalyses the reaction L-citrulline + L-aspartate + ATP = 2-(N(omega)-L-arginino)succinate + AMP + diphosphate + H(+). Its pathway is amino-acid biosynthesis; L-arginine biosynthesis; L-arginine from L-ornithine and carbamoyl phosphate: step 2/3. The protein is Argininosuccinate synthase of Corynebacterium kroppenstedtii (strain DSM 44385 / JCM 11950 / CIP 105744 / CCUG 35717).